The chain runs to 238 residues: ATP synthase subunit a (238 aa).

5 consecutive transmembrane segments (helical) span residues 18–38, 75–95, 112–132, 179–199, and 203–223; these read LTILAMSLLTITIIFILVFWA, YSLLMFILFSFVFIANNLGLM, NFGVDITLSLLVAFICHIEGI, VVTGLLLQLAVLSPFTGPLAF, and IVWTAFSMFIGFIQAYVFIIL.

Belongs to the ATPase A chain family. In terms of assembly, F-type ATPases have 2 components, CF(1) - the catalytic core - and CF(0) - the membrane proton channel. CF(1) has five subunits: alpha(3), beta(3), gamma(1), delta(1), epsilon(1). CF(0) has three main subunits: a(1), b(2) and c(9-12). The alpha and beta chains form an alternating ring which encloses part of the gamma chain. CF(1) is attached to CF(0) by a central stalk formed by the gamma and epsilon chains, while a peripheral stalk is formed by the delta and b chains.

Its subcellular location is the cell membrane. In terms of biological role, key component of the proton channel; it plays a direct role in the translocation of protons across the membrane. The polypeptide is ATP synthase subunit a (Streptococcus agalactiae serotype Ia (strain ATCC 27591 / A909 / CDC SS700)).